Reading from the N-terminus, the 540-residue chain is Methionine--tRNA ligase 1 (540 aa).

The short motif at 10-20 (PYANGSLHLGH) is the 'HIGH' region element. Zn(2+) contacts are provided by Cys141, Cys144, Cys153, and Cys156. Residues 327 to 331 (KISTS) carry the 'KMSKS' region motif. Thr330 contacts ATP.

This sequence belongs to the class-I aminoacyl-tRNA synthetase family. MetG type 1 subfamily. In terms of assembly, monomer. Zn(2+) is required as a cofactor.

It is found in the cytoplasm. The enzyme catalyses tRNA(Met) + L-methionine + ATP = L-methionyl-tRNA(Met) + AMP + diphosphate. Is required not only for elongation of protein synthesis but also for the initiation of all mRNA translation through initiator tRNA(fMet) aminoacylation. This chain is Methionine--tRNA ligase 1, found in Alkaliphilus oremlandii (strain OhILAs) (Clostridium oremlandii (strain OhILAs)).